A 155-amino-acid polypeptide reads, in one-letter code: Antitoxin HicB 1 (155 aa).

Positions 99–153 (MLNAFLDSKLTQIELANRMGVKKQEVTRIFDLRHSTKIDTVGKVASAIGHQLTLS) constitute an HTH cro/C1-type domain. The H-T-H motif DNA-binding region spans 110 to 129 (QIELANRMGVKKQEVTRIFD).

Belongs to the HicB antitoxin family. In terms of assembly, probably forms a complex with the probable mRNA interferase HicA1 (its cognate toxin); when complexed with HicA 1 inhibits the toxin activity.

Functionally, antitoxin component of a type II toxin-antitoxin (TA) system. Functions as an mRNA interferase antitoxin preventing effects of the HicA 1 toxin. The chain is Antitoxin HicB 1 (hicB1) from Photorhabdus laumondii subsp. laumondii (strain DSM 15139 / CIP 105565 / TT01) (Photorhabdus luminescens subsp. laumondii).